A 201-amino-acid polypeptide reads, in one-letter code: Putative pseudouridine methyltransferase (201 aa).

Residues M132 and C186 each contribute to the S-adenosyl-L-methionine site.

Belongs to the methyltransferase superfamily. TrmY family.

It localises to the cytoplasm. The polypeptide is Putative pseudouridine methyltransferase (Vibrio cholerae serotype O1 (strain ATCC 39315 / El Tor Inaba N16961)).